Here is a 118-residue protein sequence, read N- to C-terminus: Ribonuclease P protein component (118 aa).

Belongs to the RnpA family. As to quaternary structure, consists of a catalytic RNA component (M1 or rnpB) and a protein subunit.

The enzyme catalyses Endonucleolytic cleavage of RNA, removing 5'-extranucleotides from tRNA precursor.. Functionally, RNaseP catalyzes the removal of the 5'-leader sequence from pre-tRNA to produce the mature 5'-terminus. It can also cleave other RNA substrates such as 4.5S RNA. The protein component plays an auxiliary but essential role in vivo by binding to the 5'-leader sequence and broadening the substrate specificity of the ribozyme. The chain is Ribonuclease P protein component from Rickettsia canadensis (strain McKiel).